Reading from the N-terminus, the 363-residue chain is 4-hydroxy-2-oxovalerate aldolase 1 (363 aa).

Positions 13–265 constitute a Pyruvate carboxyltransferase domain; sequence VRMTDTSLRD…KTGIDFFDIA (253 aa). 21-22 lines the substrate pocket; that stretch reads RD. D22 serves as a coordination point for Mn(2+). The active-site Proton acceptor is the H25. S175 and H204 together coordinate substrate. 2 residues coordinate Mn(2+): H204 and H206. A substrate-binding site is contributed by Y295.

This sequence belongs to the 4-hydroxy-2-oxovalerate aldolase family.

The catalysed reaction is (S)-4-hydroxy-2-oxopentanoate = acetaldehyde + pyruvate. In Mycobacterium sp. (strain JLS), this protein is 4-hydroxy-2-oxovalerate aldolase 1.